A 505-amino-acid chain; its full sequence is AMP phosphorylase (505 aa).

Residues glycine 170, 196-201 (SRAITS), and threonine 205 each bind AMP. Aspartate 258 functions as the Proton donor in the catalytic mechanism. Residues serine 266 and lysine 290 each coordinate AMP.

It belongs to the thymidine/pyrimidine-nucleoside phosphorylase family. Type 2 subfamily.

It catalyses the reaction AMP + phosphate = alpha-D-ribose 1,5-bisphosphate + adenine. The catalysed reaction is CMP + phosphate = cytosine + alpha-D-ribose 1,5-bisphosphate. The enzyme catalyses UMP + phosphate = alpha-D-ribose 1,5-bisphosphate + uracil. Catalyzes the conversion of AMP and phosphate to adenine and ribose 1,5-bisphosphate (R15P). Exhibits phosphorylase activity toward CMP and UMP in addition to AMP. Functions in an archaeal AMP degradation pathway, together with R15P isomerase and RubisCO. This chain is AMP phosphorylase, found in Methanococcus maripaludis (strain C5 / ATCC BAA-1333).